A 977-amino-acid polypeptide reads, in one-letter code: DNA-directed RNA polymerase 3A, chloroplastic (977 aa).

The transit peptide at 1-72 (MASTASYSPS…NNIQSQTTVC (72 aa)) directs the protein to the chloroplast. Residues Asp-678, Lys-753, and Asp-910 contribute to the active site.

It belongs to the phage and mitochondrial RNA polymerase family.

It localises to the plastid. It is found in the chloroplast. The enzyme catalyses RNA(n) + a ribonucleoside 5'-triphosphate = RNA(n+1) + diphosphate. DNA-dependent RNA polymerase catalyzes the transcription of DNA into RNA using the four ribonucleoside triphosphates as substrates. The protein is DNA-directed RNA polymerase 3A, chloroplastic (RPOT3-SYL) of Nicotiana tabacum (Common tobacco).